Here is a 434-residue protein sequence, read N- to C-terminus: Double-stranded RNA-binding protein 2 (434 aa).

DRBM domains are found at residues Met1–Asn70 and Val87–Gln155. The interval Glu402–Ile434 is disordered.

As to quaternary structure, heterodimer with DRB1 or DRB5. Interacts with DCL1 and DCL5.

The protein localises to the cytoplasm. In terms of biological role, binds double-stranded RNA. May be involved in RNA-mediated silencing. This Arabidopsis thaliana (Mouse-ear cress) protein is Double-stranded RNA-binding protein 2 (DRB2).